We begin with the raw amino-acid sequence, 72 residues long: NAD(P)H-quinone oxidoreductase subunit O (72 aa).

Belongs to the complex I NdhO subunit family. In terms of assembly, NDH-1 can be composed of about 15 different subunits; different subcomplexes with different compositions have been identified which probably have different functions.

The protein localises to the cellular thylakoid membrane. It carries out the reaction a plastoquinone + NADH + (n+1) H(+)(in) = a plastoquinol + NAD(+) + n H(+)(out). The catalysed reaction is a plastoquinone + NADPH + (n+1) H(+)(in) = a plastoquinol + NADP(+) + n H(+)(out). Its function is as follows. NDH-1 shuttles electrons from an unknown electron donor, via FMN and iron-sulfur (Fe-S) centers, to quinones in the respiratory and/or the photosynthetic chain. The immediate electron acceptor for the enzyme in this species is believed to be plastoquinone. Couples the redox reaction to proton translocation, and thus conserves the redox energy in a proton gradient. Cyanobacterial NDH-1 also plays a role in inorganic carbon-concentration. The polypeptide is NAD(P)H-quinone oxidoreductase subunit O (Synechococcus sp. (strain JA-3-3Ab) (Cyanobacteria bacterium Yellowstone A-Prime)).